We begin with the raw amino-acid sequence, 248 residues long: Probable transcriptional regulatory protein Noc_0137 (248 aa).

The protein belongs to the TACO1 family.

The protein resides in the cytoplasm. In Nitrosococcus oceani (strain ATCC 19707 / BCRC 17464 / JCM 30415 / NCIMB 11848 / C-107), this protein is Probable transcriptional regulatory protein Noc_0137.